The primary structure comprises 673 residues: Probable serine/threonine-protein kinase SCO3848 (673 aa).

Residues 11-277 (YELGPVLGRG…EMRVDIEACL (267 aa)) enclose the Protein kinase domain. ATP is bound by residues 17–25 (LGRGGMAEV) and K40. D138 functions as the Proton acceptor in the catalytic mechanism. Residues 302-345 (DQPTTALRSDGGGGATTMLPPMNPDDGGYGYDERPDRRRQQPRK) form a disordered region. PASTA domains are found at residues 379 to 445 (GNDK…VVST), 446 to 511 (GAPK…EVAK), 512 to 580 (AEEK…VVGK), and 581 to 649 (AVEK…MTVP). Residues 472–500 (FEVETKQTESSQDEGTILSQNPDPGKELE) form a disordered region. Residues 479 to 493 (TESSQDEGTILSQNP) show a composition bias toward polar residues. Disordered stretches follow at residues 613-641 (AQGS…PAAT) and 653-673 (GNGN…GFGD).

This sequence belongs to the protein kinase superfamily. Ser/Thr protein kinase family.

The catalysed reaction is L-seryl-[protein] + ATP = O-phospho-L-seryl-[protein] + ADP + H(+). It catalyses the reaction L-threonyl-[protein] + ATP = O-phospho-L-threonyl-[protein] + ADP + H(+). The protein is Probable serine/threonine-protein kinase SCO3848 of Streptomyces coelicolor (strain ATCC BAA-471 / A3(2) / M145).